The sequence spans 299 residues: Peroxisomal biogenesis factor 19 (299 aa).

The disordered stretch occupies residues 1 to 63 (MAAAEEGCDA…SPGDTAKDAL (63 aa)). The residue at position 2 (Ala2) is an N-acetylalanine. The interval 2–56 (AAAEEGCDAGVEADRELEELLESALDDFDKAKPSPAPPPTTSAPDASGPQKKSPG) is docking to the peroxisome membrane and binding to PEX3. Residues 2–91 (AAAEEGCDAG…QATAEFEKAM (90 aa)) are necessary for PEX19 function on peroxisome biogenesis. Acidic residues predominate over residues 16 to 27 (RELEELLESALD). Residues Ser35, Ser54, and Ser66 each carry the phosphoserine modification. The residue at position 236 (Thr236) is a Phosphothreonine. The residue at position 296 (Cys296) is a Cysteine methyl ester. Cys296 is lipidated: S-farnesyl cysteine. A propeptide spans 297 to 299 (LIM) (removed in mature form).

This sequence belongs to the peroxin-19 family. In terms of assembly, interacts with a broad range of peroxisomal membrane proteins, including PEX3, PEX10, PEX11A, PEX11B, PEX12, PEX13, PEX14 and PEX16, PXMP2/PMP22, PXMP4/PMP24, SLC25A17/PMP34, ABCD1/ALDP, ABCD2/ALDRP, and ABCD3/PMP70. Also interacts with the tumor suppressor CDKN2A/p19ARF. Ubiquitous.

It is found in the cytoplasm. Its subcellular location is the peroxisome membrane. Necessary for early peroxisomal biogenesis. Acts both as a cytosolic chaperone and as an import receptor for peroxisomal membrane proteins (PMPs). Binds and stabilizes newly synthesized PMPs in the cytoplasm by interacting with their hydrophobic membrane-spanning domains, and targets them to the peroxisome membrane by binding to the integral membrane protein PEX3. Excludes CDKN2A from the nucleus and prevents its interaction with MDM2, which results in active degradation of TP53. This chain is Peroxisomal biogenesis factor 19 (PEX19), found in Cricetulus griseus (Chinese hamster).